A 189-amino-acid polypeptide reads, in one-letter code: FUN14 domain-containing protein 2 (189 aa).

The Cytoplasmic segment spans residues 1–80; the sequence is METSAPRAGS…GQESGPSAEK (80 aa). Ser-10 and Ser-53 each carry phosphoserine. The helical transmembrane segment at 81-101 threads the bilayer; sequence YSVATQLFIGGVTGWCTGFIF. Topologically, residues 102–107 are mitochondrial intermembrane; it reads QNVGKL. Residues 108-128 traverse the membrane as a helical segment; that stretch reads AATAVGGGFFLLQLANHTGYI. The Cytoplasmic portion of the chain corresponds to 129–164; the sequence is KVDWQRVEKDMKKAKEQLKIRKSNQMPTEVRSKAEE. Ser-151 bears the Phosphoserine mark. The helical transmembrane segment at 165–185 threads the bilayer; the sequence is VVSFVKKNVLVTGGFFGGFLL. At 186 to 189 the chain is on the mitochondrial intermembrane side; the sequence is GMAS.

Belongs to the FUN14 family.

It localises to the mitochondrion outer membrane. It is found in the nucleus. In terms of biological role, binds directly and specifically 1,2-Diacyl-sn-glycero-3-phospho-(1'-myo-inositol-3',4',5'-bisphosphate) (PIP3) leading to the recruitment of PIP3 to mitochondria and may play a role in the regulation of the platelet activation via AKT/GSK3B/cGMP signaling pathways. May act as transcription factor that regulates SREBP1 (isoform SREBP-1C) expression in order to modulate triglyceride (TG) homeostasis in hepatocytes. The chain is FUN14 domain-containing protein 2 from Macaca mulatta (Rhesus macaque).